The sequence spans 364 residues: Chorismate synthase (364 aa).

The disordered stretch occupies residues 41-60; the sequence is MQHDLDRRRPGTSRYTTARR. The NADP(+) site is built by Arg-48 and Arg-54. FMN-binding positions include 125–127, 238–239, Gly-278, 293–297, and Arg-319; these read RSS, NA, and KPTSS.

This sequence belongs to the chorismate synthase family. In terms of assembly, homotetramer. FMNH2 serves as cofactor.

It carries out the reaction 5-O-(1-carboxyvinyl)-3-phosphoshikimate = chorismate + phosphate. It functions in the pathway metabolic intermediate biosynthesis; chorismate biosynthesis; chorismate from D-erythrose 4-phosphate and phosphoenolpyruvate: step 7/7. In terms of biological role, catalyzes the anti-1,4-elimination of the C-3 phosphate and the C-6 proR hydrogen from 5-enolpyruvylshikimate-3-phosphate (EPSP) to yield chorismate, which is the branch point compound that serves as the starting substrate for the three terminal pathways of aromatic amino acid biosynthesis. This reaction introduces a second double bond into the aromatic ring system. The protein is Chorismate synthase of Shewanella sp. (strain ANA-3).